The sequence spans 880 residues: GRB2-associated and regulator of MAPK protein 2 (880 aa).

The interval 12 to 320 (RWSMGAFPLD…HFLLLTDTPR (309 aa)) is CABIT. Disordered regions lie at residues 385 to 407 (PGAVRAPGPPGRLGPALPAPGDS), 461 to 483 (IVGPPRHEPEAPPPPVPPKSEAV), 527 to 548 (SSLSYYSSGLQDGAGSRSGSGS), 569 to 611 (SESS…ADTP), and 633 to 713 (APFG…ELGQ). 2 stretches are compositionally biased toward low complexity: residues 640 to 663 (PFSGPAHPSGAPAASSSGSISTSG) and 683 to 696 (QGYSAAPSSSLSSS). Serine 740 is modified (phosphoserine). The 65-residue stretch at 813 to 877 (SALSLEEVSR…KIMQFIKGWR (65 aa)) folds into the SAM domain.

The protein belongs to the GAREM family.

Its function is as follows. Probable adapter protein that provides a critical link between cell surface epidermal growth factor receptor and the MAPK/ERK signaling pathway. The sequence is that of GRB2-associated and regulator of MAPK protein 2 (Garem2) from Mus musculus (Mouse).